We begin with the raw amino-acid sequence, 459 residues long: Alcohol acyl transferase 1 allele GSa (459 aa).

Active-site proton acceptor residues include H164 and N385.

This sequence belongs to the plant acyltransferase family. In terms of tissue distribution, highly expressed in the cortex and skin of ripe fruit.

The enzyme catalyses butan-1-ol + acetyl-CoA = butyl acetate + CoA. The catalysed reaction is butan-1-ol + butanoyl-CoA = butyl butanoate + CoA. It catalyses the reaction butan-1-ol + hexanoyl-CoA = butyl hexanoate + CoA. It carries out the reaction hexan-1-ol + butanoyl-CoA = hexyl butanoate + CoA. The enzyme catalyses hexan-1-ol + acetyl-CoA = hexyl acetate + CoA. The catalysed reaction is 2-methylbutan-1-ol + butanoyl-CoA = 2-methylbutyl butanoate + CoA. It catalyses the reaction ethanol + butanoyl-CoA = ethyl butanoate + CoA. It carries out the reaction hexanoyl-CoA + ethanol = ethyl hexanoate + CoA. Involved in the biosynthesis of volatile esters which confer ripe apple fruit flavor. Alcohol acyl transferase that can use a wide range of alcohols as substrate, including 2-methylbutanol, hexanol and ethanol, to produce esters such as butyl butanoate, butyl hexanoate, hexyl butanoate, ethyl butanoate and ethyl hexanoate and, to some extent, 2-methylbutyl acetate (2MBA), butyl acetate, hexyl acetate and 2-methylbutyl butanoate (2MBB). In Malus domestica (Apple), this protein is Alcohol acyl transferase 1 allele GSa.